The sequence spans 416 residues: Gamma-glutamyl phosphate reductase (416 aa).

Belongs to the gamma-glutamyl phosphate reductase family.

The protein resides in the cytoplasm. It carries out the reaction L-glutamate 5-semialdehyde + phosphate + NADP(+) = L-glutamyl 5-phosphate + NADPH + H(+). It participates in amino-acid biosynthesis; L-proline biosynthesis; L-glutamate 5-semialdehyde from L-glutamate: step 2/2. Functionally, catalyzes the NADPH-dependent reduction of L-glutamate 5-phosphate into L-glutamate 5-semialdehyde and phosphate. The product spontaneously undergoes cyclization to form 1-pyrroline-5-carboxylate. This Streptococcus thermophilus protein is Gamma-glutamyl phosphate reductase.